A 35-amino-acid polypeptide reads, in one-letter code: MLNWQVIVQLVFLALIITTGPVIIVYLSTRERNLL.

A helical membrane pass occupies residues 6-26; sequence VIVQLVFLALIITTGPVIIVY.

This sequence belongs to the Psb30/Ycf12 family. In terms of assembly, PSII is composed of 1 copy each of membrane proteins PsbA, PsbB, PsbC, PsbD, PsbE, PsbF, PsbH, PsbI, PsbJ, PsbK, PsbL, PsbM, PsbT, PsbY, PsbZ, Psb30/Ycf12, peripheral proteins of the oxygen-evolving complex and a large number of cofactors. It forms dimeric complexes.

The protein resides in the plastid. It is found in the chloroplast thylakoid membrane. A core subunit of photosystem II (PSII), probably helps stabilize the reaction center. In Cyanidium caldarium (Red alga), this protein is Photosystem II reaction center protein Psb30.